Consider the following 344-residue polypeptide: Mitochondrial mRNA pseudouridine synthase Rpusd3 (344 aa).

A mitochondrion-targeting transit peptide spans 1–36; that stretch reads MGALRVLRYVSMIWRPELGSCARQRDAGFGTEARRP. The interval 25–53 is disordered; the sequence is RDAGFGTEARRPSQPHRSSKHKDLVEDQP.

This sequence belongs to the pseudouridine synthase RluA family. Forms a regulatory protein-RNA complex, consisting of RCC1L, NGRN, RPUSD3, RPUSD4, TRUB2, FASTKD2 and 16S mt-rRNA.

The protein resides in the mitochondrion matrix. It carries out the reaction a uridine in mRNA = a pseudouridine in mRNA. Functionally, catalyzes uridine to pseudouridine isomerization (pseudouridylation) of specific mitochondrial mRNAs (mt-mRNAs), a post-transcriptional modification necessary for their translation. Acts at position 390 in COXI mt-mRNA and at position 697-699 in mitochondrial COXIII mt-mRNA. As a component of a functional protein-RNA module, consisting of RCC1L, NGRN, RPUSD3, RPUSD4, TRUB2, FASTKD2 and 16S mitochondrial ribosomal RNA (16S mt-rRNA), controls 16S mt-rRNA abundance and may play a role in mitochondrial ribosome biogenesis. The polypeptide is Mitochondrial mRNA pseudouridine synthase Rpusd3 (Rpusd3) (Mus musculus (Mouse)).